The sequence spans 1253 residues: Structural polyprotein (1253 aa).

The host transcription inhibition stretch occupies residues 37 to 71; it reads FQAQQMQQLISAVNALTMRQNAIAPARPPKPKKKK. Residues 58 to 109 form a disordered region; the sequence is AIAPARPPKPKKKKTTKPKPKTQPKKINGKTQQQKKKDKQADKKKKKPGKRE. Residues 64-105 carry the Nuclear localization signal motif; that stretch reads PPKPKKKKTTKPKPKTQPKKINGKTQQQKKKDKQADKKKKKP. Over residues 65-107 the composition is skewed to basic residues; sequence PKPKKKKTTKPKPKTQPKKINGKTQQQKKKDKQADKKKKKPGK. Residues 87–120 form a binding to the viral RNA region; that stretch reads KTQQQKKKDKQADKKKKKPGKRERMCMKIENDCI. The interval 105–119 is ribosome-binding; the sequence is PGKRERMCMKIENDC. An intrachain disulfide couples Cys-119 to Cys-134. The Peptidase S3 domain maps to 119 to 267; that stretch reads CIFEVKHEGK…RVTPEGSEEW (149 aa). His-145 serves as the catalytic Charge relay system. Positions 150-160 match the Nuclear export signal motif; the sequence is IDNADLAKLAF. Residues 161–166 are interaction with spike glycoprotein E2; that stretch reads KKSSKY. Asp-167 serves as the catalytic Charge relay system. The segment at 189–199 is dimerization of the capsid protein; that stretch reads PEGHYNWHHGA. The Charge relay system role is filled by Ser-219. A dimerization of the capsid protein region spans residues 225-229; it reads DNKGR. Residues 268 to 701 lie on the Extracellular side of the membrane; sequence SAPLITAMCV…YGLYPAATVS (434 aa). Disulfide bonds link Cys-276–Cys-285, Cys-290–Cys-294, and Cys-293–Cys-325. The N-linked (GlcNAc...) asparagine; by host glycan is linked to Asn-280. The N-linked (GlcNAc...) asparagine; by host glycan is linked to Asn-327. 6 disulfide bridges follow: Cys-352–Cys-458, Cys-355–Cys-361, Cys-424–Cys-438, Cys-486–Cys-598, Cys-534–Cys-558, and Cys-536–Cys-553. Residue Asn-533 is glycosylated (N-linked (GlcNAc...) asparagine; by host). The N-linked (GlcNAc...) asparagine; by host glycan is linked to Asn-595. The helical transmembrane segment at 702 to 722 threads the bilayer; the sequence is AVVGMSLLALISIFASCYMLV. Cys-718 is lipidated: S-stearoyl cysteine; by host. The interval 723-727 is interaction with the capsid protein; that stretch reads AARSK. Residues 723 to 755 lie on the Cytoplasmic side of the membrane; it reads AARSKCLTPYALTPGAAVPWTLGILCCAPRAHA. Cys-728 is lipidated: S-stearoyl cysteine; by host. Residues 728–748 are transient transmembrane before p62-6K protein processing; sequence CLTPYALTPGAAVPWTLGILC. A disulfide bond links Cys-728 and Cys-749. S-palmitoyl cysteine; by host attachment occurs at residues Cys-748 and Cys-749. Over 756 to 770 the chain is Extracellular; that stretch reads ASVAETMAYLWDQNQ. A helical transmembrane segment spans residues 771–791; sequence ALFWLEFAAPVACILIITYCL. A topological domain (cytoplasmic) is located at residue Arg-792. A helical membrane pass occupies residues 793-813; the sequence is NVLCCCKSLSFLVLLSLGATA. Over 814–1230 the chain is Extracellular; the sequence is RAYEHSTVMP…ALSWVQKISG (417 aa). 4 cysteine pairs are disulfide-bonded: Cys-864/Cys-929, Cys-877/Cys-909, Cys-878/Cys-911, and Cys-883/Cys-893. The E1 fusion peptide loop stretch occupies residues 899-916; the sequence is VYPFMWGGAYCFCDSENT. N-linked (GlcNAc...) asparagine; by host glycosylation is found at Asn-956 and Asn-1085. 4 cysteine pairs are disulfide-bonded: Cys-1074–Cys-1086, Cys-1116–Cys-1191, Cys-1121–Cys-1195, and Cys-1143–Cys-1185. The E1-DIII; interaction with host receptor VLDLR stretch occupies residues 1112–1192; it reads IDLTCTVATC…SLCSARATCS (81 aa). The chain crosses the membrane as a helical span at residues 1231 to 1251; sequence GLGAFAIGAILVLVVVTCIGL. Residue Cys-1248 is the site of S-stearoyl cysteine; by host attachment. Residues 1252 to 1253 are Cytoplasmic-facing; the sequence is RR.

In terms of assembly, homodimer. Homomultimer. Interacts with host karyopherin KPNA4; this interaction allows the nuclear import of the viral capsid protein. Interacts with spike glycoprotein E2. Interacts with host IRAK1; the interaction leads to inhibition of IRAK1-dependent signaling. The precursor of protein E3/E2 and E1 form a heterodimer shortly after synthesis. As to quaternary structure, the precursor of protein E3/E2 and E1 form a heterodimer shortly after synthesis. Processing of the precursor of protein E3/E2 into E2 and E3 results in a heterodimer of the spike glycoproteins E2 and E1. Spike at virion surface are constituted of a trimer of E2-E1 heterodimers. E2-E1 heterodimers interact with host VLDLR or LRP8/APOER2 to mediate viral entry. After target cell attachment and endocytosis, E1 change conformation to form homotrimers. Interacts with 6K protein. Interacts (via E1-DIII) with host VLDLR (via class A repeats); this interaction mediates viral entry into host cell. In terms of assembly, interacts with spike glycoprotein E1. Processing of the precursor of protein E3/E2 into E2 and E3 results in a heterodimer of the spike glycoproteins E2 and E1. Spike at virion surface are constituted of a trimer of E2-E1 heterodimers. E2-E1 heterodimers interact with host VLDLR or LRP8/APOER2 to mediate viral entry. Interacts with 6K protein. Oligomer. Interacts with spike glycoprotein E1. Interacts with spike glycoprotein E2. Post-translationally, specific enzymatic cleavages in vivo yield mature proteins. Capsid protein is auto-cleaved during polyprotein translation, unmasking a signal peptide at the N-terminus of the precursor of E3/E2. The remaining polyprotein is then targeted to the host endoplasmic reticulum, where host signal peptidase cleaves it into pE2, 6K and E1 proteins. pE2 is further processed to mature E3 and E2 by host furin in trans-Golgi vesicle. Protein processing process takes about 30 minutes at physiologic temperatures. The folding of the p62/6K/E1 precursor requires the formation of intrachain disulfide bonds and has been shown to involve a transient covalent interaction between the nascent and newly synthesized heterodimer and the host-cell chaperones, P4HB/PDI and PDIA3/ERp57. The folding pathway also includes non covalent interaction with human CANX/calnexin and CALR/calreticulin. In terms of processing, palmitoylated via thioester bonds. These palmitoylations may induce disruption of the C-terminus transmembrane. This would result in the reorientation of E2 C-terminus from lumenal to cytoplasmic side. Envelope E1, E2 and E3 proteins are N-glycosylated. Post-translationally, stearoylated. In terms of processing, palmitoylated via thioester bonds with about four covalently bound fatty acids per molecule.

It is found in the virion. Its subcellular location is the host cytoplasm. It localises to the host cell membrane. The protein localises to the host nucleus. The protein resides in the virion membrane. It is found in the host Golgi apparatus. Its subcellular location is the host trans-Golgi network. It localises to the host endoplasmic reticulum. It carries out the reaction Autocatalytic release of the core protein from the N-terminus of the togavirus structural polyprotein by hydrolysis of a -Trp-|-Ser- bond.. Forms an icosahedral capsid with a T=4 symmetry composed of 240 copies of the capsid protein surrounded by a lipid membrane through which penetrate 80 spikes composed of trimers of E1-E2 heterodimers. The capsid protein binds to the viral RNA genome at a site adjacent to a ribosome binding site for viral genome translation following genome release. Possesses a protease activity that results in its autocatalytic cleavage from the nascent structural protein. Following its self-cleavage, the capsid protein transiently associates with ribosomes, and within several minutes the protein binds to viral RNA and rapidly assembles into icosahedric core particles. The resulting nucleocapsid eventually associates with the cytoplasmic domain of the spike glycoprotein E2 at the cell membrane, leading to budding and formation of mature virions. In case of infection, new virions attach to target cells and after clathrin-mediated endocytosis their membrane fuses with the host endosomal membrane. This leads to the release of the nucleocapsid into the cytoplasm, followed by an uncoating event necessary for the genomic RNA to become accessible. The uncoating might be triggered by the interaction of capsid proteins with ribosomes. Binding of ribosomes would release the genomic RNA since the same region is genomic RNA-binding and ribosome-binding. Specifically inhibits interleukin-1 receptor-associated kinase 1/IRAK1-dependent signaling during viral entry, representing a means by which the alphaviruses may evade innate immune detection and activation prior to viral gene expression. In terms of biological role, provides the signal sequence for the translocation of the precursor of protein E3/E2 to the host endoplasmic reticulum. Furin-cleaved E3 remains associated with spike glycoprotein E1 and mediates pH protection of the latter during the transport via the secretory pathway. After virion release from the host cell, the assembly protein E3 is gradually released in the extracellular space. Functionally, plays a role in viral attachment to target host cell, by binding to the cell receptors VLDLR or LRP8/APOER2. The host LDLR can act as a cell receptor for viral entry. Synthesized as a p62 precursor which is processed by furin at the cell membrane just before virion budding, giving rise to E2-E1 heterodimer. The p62-E1 heterodimer is stable, whereas E2-E1 is unstable and dissociate at low pH. p62 is processed at the last step, presumably to avoid E1 fusion activation before its final export to cell surface. E2 C-terminus contains a transitory transmembrane that would be disrupted by palmitoylation, resulting in reorientation of the C-terminal tail from lumenal to cytoplasmic side. This step is critical since E2 C-terminus is involved in budding by interacting with capsid proteins. This release of E2 C-terminus in cytoplasm occurs lately in protein export, and precludes premature assembly of particles at the endoplasmic reticulum membrane. Its function is as follows. Acts as a viroporin that participates in virus glycoprotein processing and transport to the plasma membrane, cell permeabilization and budding of viral particles. Disrupts the calcium homeostasis of the cell, probably at the endoplasmic reticulum level. This leads to cytoplasmic calcium elevation. Because of its lipophilic properties, the 6K protein is postulated to influence the selection of lipids that interact with the transmembrane domains of the glycoproteins, which, in turn, affects the deformability of the bilayer required for the extreme curvature that occurs as budding proceeds. Present in low amount in virions, about 3% compared to viral glycoproteins. Class II viral fusion protein. Fusion activity is inactive as long as E1 is bound to E2 in mature virion. After virus attachment to target cell via host VLDLR or LRP8/APOER2 and endocytosis, acidification of the endosome induces dissociation of E1/E2 heterodimer and concomitant trimerization of the E1 subunits. This E1 trimer is fusion active, and promotes release of viral nucleocapsid in cytoplasm after endosome and viral membrane fusion. Efficient fusion requires the presence of cholesterol and sphingolipid in the target membrane. Fusion is optimal at levels of about 1 molecule of cholesterol per 2 molecules of phospholipids, and is specific for sterols containing a 3-beta-hydroxyl group. The polypeptide is Structural polyprotein (Aedes (Middle-African hedgehog)).